The chain runs to 947 residues: MLEKTYDSASVEPKIAKAWDEANAFRAGANAKPGAETFTIVIPPPNVTGSLHMGHALNNTLQDILVRFERMRGKDVLWQPGMDHAGIATQMVVERKLMENQLPGRREMGREAFVEKVWEWKAESGGLIFNQLKRLGASCDWSRERFTMDEGLSEAVLEVFVTLYKQNLIYKAKRLVNWDPKLQTAISDMEVEQIEVKGNLWHFRYPLEKGVTYEYPVAFDADGTPTEFETRDYIVVATTRPETMLGDTGVAVNPEDERYKGIVGKHVILPIVGRKIPIVADDYADPTAGTGAVKITPAHDFNDFEVGKRCGLRAINVMNIDGTISIKENEDFLEGLSHPAALHGAWDRLEGQDRFTARKIIVEIFEEAGLLDKIEPHKHVVPHGDRGGVPIEPRLTDQWWVDNKTLAQPAIASVREGRTNFVPKNWENTYFQWMENIQPWCISRQLWWGHQIPAWYGPDGQVFVEKTEEEALQAAIQHYIAHEGPWKAWVEEKLENFAPGEILTRDEDVLDTWFSSALWPFSTLGWPEQTPELARYYPTNVLVTGFDIIPFWVVRMMQMGLHFMKDDAGNPVEPFSTVYIHALVRDKNGQKMSKSKGNVIDPLELIDEYGADALRFTLAIMAAQGRDVKLDPARIAGYRNFGTKLWNATRFAEMNGVKRDPHFLAETASLTINRWILTELANTARDVTAALENFRFNDASGILYRFVWNQFCDWYLELLKPVFSGEDEEAKRESQACAAYVLEEIYKLLHPFMPFMTEELWAHTAGEGEERDDLLCLTDWPEPEFRDDAAAAEINWLIDLVSGIRSARAEMNVPPGATASLVVVGANTSTEARLDRHAAAIRRLARADEIRGGDVAPKGSAQIIVGEATVCLPLGNLVDLAAEQARLEKAIGKVDAEMERIDKKLSNEKFVANADPEVVAAERERKAELDVQLASLRTALTRVSEAG.

The short motif at 45 to 55 is the 'HIGH' region element; the sequence is PNVTGSLHMGH. The 'KMSKS' region motif lies at 591 to 595; it reads KMSKS. An ATP-binding site is contributed by K594. Residues 879–943 adopt a coiled-coil conformation; the sequence is DLAAEQARLE…ASLRTALTRV (65 aa).

This sequence belongs to the class-I aminoacyl-tRNA synthetase family. ValS type 1 subfamily. As to quaternary structure, monomer.

Its subcellular location is the cytoplasm. It carries out the reaction tRNA(Val) + L-valine + ATP = L-valyl-tRNA(Val) + AMP + diphosphate. Catalyzes the attachment of valine to tRNA(Val). As ValRS can inadvertently accommodate and process structurally similar amino acids such as threonine, to avoid such errors, it has a 'posttransfer' editing activity that hydrolyzes mischarged Thr-tRNA(Val) in a tRNA-dependent manner. The chain is Valine--tRNA ligase from Agrobacterium fabrum (strain C58 / ATCC 33970) (Agrobacterium tumefaciens (strain C58)).